The following is a 344-amino-acid chain: Protein RecA (344 aa).

An ATP-binding site is contributed by 66 to 73; it reads GPESSGKT.

Belongs to the RecA family.

The protein resides in the cytoplasm. Can catalyze the hydrolysis of ATP in the presence of single-stranded DNA, the ATP-dependent uptake of single-stranded DNA by duplex DNA, and the ATP-dependent hybridization of homologous single-stranded DNAs. It interacts with LexA causing its activation and leading to its autocatalytic cleavage. In Azoarcus sp. (strain BH72), this protein is Protein RecA.